Consider the following 456-residue polypeptide: MDFEQISRSLLPLLGGKENIASAAHCATRLRLVLVDDALADQQAIGKIDGVKGCFRNAGQMQIIFGTGVVNKVYAAFIQAAGISESSKSEAADLAAKKLNPFQRIARLLSNIFVPIIPAIVASGLLMGLLGMVKTYGWVDPSNALYIMLDMCSSAAFIILPILIGFTAAREFGGNPYLGATLGGILTHPALTNAWGVAAGFHTMNFFGIEVAMIGYQGTVFPVLLAVWFMSMVEKRLRRVIPDALDLILTPFLTVIISGFIALLLIGPAGRALGDGISFILSTLISHAGWLAGLLFGGLYSVIVITGIHHSFHAIEAGLLGNPSIGVNFLLPIWAMANVAQGGACFAVWFKTKDAKIKAITLPSAFSAMLGITEAAIFGINLRFVKPFIAALVGGAAGGAWVVSMHVYMTAVGLTAIPGMAIVQASSLLNYIIGMAIAFAVAFALSLTLKYKTDAE.

The PTS EIIB type-1 domain maps to 4-87 (EQISRSLLPL…IQAAGISESS (84 aa)). The active-site Phosphocysteine intermediate; for EIIB activity is the C26. The PTS EIIC type-1 domain maps to 107 to 456 (RLLSNIFVPI…LTLKYKTDAE (350 aa)). 10 helical membrane-spanning segments follow: residues 112–132 (IFVP…LLGM), 144–164 (ALYI…PILI), 181–201 (TLGG…AAGF), 209–229 (IEVA…AVWF), 247–267 (LILT…LLIG), 288–308 (AGWL…ITGI), 329–349 (FLLP…FAVW), 360–380 (ITLP…IFGI), 388–408 (FIAA…MHVY), and 428–448 (LLNY…LSLT).

The protein resides in the cell inner membrane. The catalysed reaction is N(pros)-phospho-L-histidyl-[protein](out) + sucrose = sucrose 6(G)-phosphate(in) + L-histidyl-[protein]. Its function is as follows. The phosphoenolpyruvate-dependent sugar phosphotransferase system (sugar PTS), a major carbohydrate active transport system, catalyzes the phosphorylation of incoming sugar substrates concomitantly with their translocation across the cell membrane. This system is involved in sucrose transport. This Klebsiella pneumoniae protein is PTS system sucrose-specific EIIBC component.